The following is a 428-amino-acid chain: Trigger factor (428 aa).

A PPIase FKBP-type domain is found at 163-248; the sequence is GDTAVIDFEG…VHEIKEKRLP (86 aa).

Belongs to the FKBP-type PPIase family. Tig subfamily.

It localises to the cytoplasm. It carries out the reaction [protein]-peptidylproline (omega=180) = [protein]-peptidylproline (omega=0). Its function is as follows. Involved in protein export. Acts as a chaperone by maintaining the newly synthesized protein in an open conformation. Functions as a peptidyl-prolyl cis-trans isomerase. The polypeptide is Trigger factor (Geobacillus sp. (strain WCH70)).